Reading from the N-terminus, the 712-residue chain is Anaerobic ribonucleoside-triphosphate reductase (712 aa).

One can recognise an ATP-cone domain in the interval 3-92; the sequence is PHVMKRDGCK…EYRHDRDIQR (90 aa). Positions 583–708 constitute a Glycine radical domain; it reads KKVNPYDKID…VKRRVKHLGN (126 aa). The Zn(2+) site is built by Cys644, Cys647, Cys662, and Cys665. Gly681 carries the post-translational modification Glycine radical.

The protein belongs to the anaerobic ribonucleoside-triphosphate reductase family. Forms a tetramer composed of two NrdD and two NrdG subunits.

The enzyme catalyses a ribonucleoside 5'-triphosphate + formate + H(+) = a 2'-deoxyribonucleoside 5'-triphosphate + CO2 + H2O. Activated under anaerobic conditions by NrdG, a tightly associated activase. Activation involves the formation of a glycyl radical at Gly-681. Catalyzes the conversion of ribonucleotides into deoxyribonucleotides, which are required for DNA synthesis and repair. In Salmonella typhimurium (strain LT2 / SGSC1412 / ATCC 700720), this protein is Anaerobic ribonucleoside-triphosphate reductase (nrdD).